The primary structure comprises 303 residues: Putative monooxygenase p33MONOX (303 aa).

Disordered stretches follow at residues methionine 1–methionine 20, leucine 37–lysine 56, histidine 66–valine 96, lysine 156–serine 233, and arginine 260–glutamine 283. The residue at position 44 (threonine 44) is a Phosphothreonine. Positions leucine 67–valine 77 match the Flavin-containing monooxygenase motif motif. Residues serine 76–aspartate 89 are compositionally biased toward polar residues. Residues alanine 170–serine 183 show a composition bias toward low complexity. A Phosphothreonine modification is found at threonine 175. Serine 183 bears the Phosphoserine mark.

This sequence belongs to the P33MONOX family. As to quaternary structure, interacts with NELFB, NOL12 and PRNP. Expressed in neuronal pyramidal cells of the hippocampus and in the neurons of the cortex.

The protein localises to the cytoplasm. In terms of biological role, potential NADPH-dependent oxidoreductase. May be involved in the regulation of neuronal survival, differentiation and axonal outgrowth. In Mus musculus (Mouse), this protein is Putative monooxygenase p33MONOX (P33monox).